Here is a 199-residue protein sequence, read N- to C-terminus: MSILISPSDNTGWGLGTGKMYGGARKRSAEHPVHVRSYWRAAWGSRNRRRVATVAAEDAEAPQLEDVAQAPATVPIVRRHRRRVGGSARTRGLRKSARVRAAARAIVRAVNGAAAAAAPTVPASANFAAMVGAIANARAAYRHRRSRAGINPVPASRSTTRVRLPRTVRFHPSMGAFHRRWWRIHTRGRRKASVRRRRT.

An N-acetylserine; by host modification is found at Ser-2. The propeptide occupies 2–23 (SILISPSDNTGWGLGTGKMYGG). N6-acetyllysine; by host is present on Lys-26. The short motif at 189 to 199 (RRKASVRRRRT) is the Nuclear localization signal element.

This sequence belongs to the adenoviridae histone-like nucleoprotein family. Interacts with the core-capsid bridging protein; this interaction bridges the virus core to the capsid. Interacts with host NPM1; this interaction might play a role in placing the pre-histone-like nucleoprotein on the viral DNA or regulating viral gene expression. Interacts with host HMGB1; this interaction inhibits host immune response. Post-translationally, cleaved near the N-terminus by the viral protease during virion maturation to form the mature protein.

It localises to the virion. The protein localises to the host nucleus. The protein resides in the host nucleolus. Its function is as follows. Plays a role in the inhibition of host immune response within the nucleus. Interacts with cellular nucleosomes and immobilizes the host immune danger signal HMGB1 on chromatin. In turn, prevents HMGB1 release out of the cell and thus decreases inflammation. Also plays a role in the wrapping and condensation of the viral DNA. May also promote viral genome import into the nucleus. This Murine adenovirus A serotype 1 (MAdV-1) protein is Pre-histone-like nucleoprotein.